A 74-amino-acid chain; its full sequence is MARPFFRRRKSCPFAAKDAPKIDYKDVRLLQGFVSERGKIVPSRITAVSAKKQRELARAIKRARHIGLLPFIVK.

The protein belongs to the bacterial ribosomal protein bS18 family. In terms of assembly, part of the 30S ribosomal subunit. Forms a tight heterodimer with protein bS6.

Binds as a heterodimer with protein bS6 to the central domain of the 16S rRNA, where it helps stabilize the platform of the 30S subunit. This Zymomonas mobilis subsp. mobilis (strain ATCC 31821 / ZM4 / CP4) protein is Small ribosomal subunit protein bS18.